Here is a 385-residue protein sequence, read N- to C-terminus: MAKIYFIAGEMSGDFIGGRIIQHLKNNTGVQFVGVGSKYMEEAGSFKSLFPISAINLIGFVEILPHILKLKKLIDKTVEDIINSKADLLITIDSPGFTYRVAKQVRKLLPKLKMIHIVAPSVWAYKEGRAIKYAKIYDCLFAVLPFESPYFTKVGLDCRYIGHPIMEQEFYSDKIALRKEFKIDENEKVLCVTLGSRRGEILRHLPVFIASIEEIFESCKNLKVIFTLVNPANEVIIKPFLENVKFNYLFSSERLKTYALSDLALAKSGTNTLEIAASGTPMIVAYKVNILSFLIIRALIKIKYVTLINIIAGSEIIPEFIQHNCRATLISNKLQELLFSSKKAYKQVIESQKILQKLRFKSNQLPSYIAAEIIKQEFLEPKIKL.

The protein belongs to the LpxB family.

The enzyme catalyses a lipid X + a UDP-2-N,3-O-bis[(3R)-3-hydroxyacyl]-alpha-D-glucosamine = a lipid A disaccharide + UDP + H(+). It functions in the pathway bacterial outer membrane biogenesis; LPS lipid A biosynthesis. In terms of biological role, condensation of UDP-2,3-diacylglucosamine and 2,3-diacylglucosamine-1-phosphate to form lipid A disaccharide, a precursor of lipid A, a phosphorylated glycolipid that anchors the lipopolysaccharide to the outer membrane of the cell. In Rickettsia canadensis (strain McKiel), this protein is Lipid-A-disaccharide synthase.